The sequence spans 963 residues: Bifunctional glutamine synthetase adenylyltransferase/adenylyl-removing enzyme (963 aa).

Residues 1–451 (MAAPSELQLY…EHFADIIAER (451 aa)) are adenylyl removase. The tract at residues 461–963 (TIEWKALWAG…VAFWEKVFAE (503 aa)) is adenylyl transferase.

The protein belongs to the GlnE family. Mg(2+) is required as a cofactor.

It catalyses the reaction [glutamine synthetase]-O(4)-(5'-adenylyl)-L-tyrosine + phosphate = [glutamine synthetase]-L-tyrosine + ADP. The catalysed reaction is [glutamine synthetase]-L-tyrosine + ATP = [glutamine synthetase]-O(4)-(5'-adenylyl)-L-tyrosine + diphosphate. Its function is as follows. Involved in the regulation of glutamine synthetase GlnA, a key enzyme in the process to assimilate ammonia. When cellular nitrogen levels are high, the C-terminal adenylyl transferase (AT) inactivates GlnA by covalent transfer of an adenylyl group from ATP to specific tyrosine residue of GlnA, thus reducing its activity. Conversely, when nitrogen levels are low, the N-terminal adenylyl removase (AR) activates GlnA by removing the adenylyl group by phosphorolysis, increasing its activity. The regulatory region of GlnE binds the signal transduction protein PII (GlnB) which indicates the nitrogen status of the cell. This is Bifunctional glutamine synthetase adenylyltransferase/adenylyl-removing enzyme from Hahella chejuensis (strain KCTC 2396).